The sequence spans 515 residues: 1-pyrroline-5-carboxylate dehydrogenase (515 aa).

Residues glutamate 286 and cysteine 320 contribute to the active site.

It belongs to the aldehyde dehydrogenase family. RocA subfamily.

It catalyses the reaction L-glutamate 5-semialdehyde + NAD(+) + H2O = L-glutamate + NADH + 2 H(+). The protein operates within amino-acid degradation; L-proline degradation into L-glutamate; L-glutamate from L-proline: step 2/2. The sequence is that of 1-pyrroline-5-carboxylate dehydrogenase from Anoxybacillus flavithermus (strain DSM 21510 / WK1).